Consider the following 485-residue polypeptide: MDYEAIIGLEVHVQLKTQTKLFCGCAVEYGATPNSRVCPVCLGLPGALPSPNKEAIILTIQTGLMLGSEIARRGKFDRKNYFYPDMPKNYQISQYDQPLCKGGSVQLYPLAFPKDAQKDPQAQERKKIRIVRVHLEEDVGKSFHFDENSGIDFNRAGTPLMEIVSEADIRSPEEAFAYLSALRQILRYGNVSDCDMEKGQLRCDVNVSVKPAGEKKWGTKCEIKNLNSISAVRKALKYEIQRQIHVLSTGSKISQETLRWDDLRGQTVPMRTKEYAHDYRYFPDPDLLTVVTEGELVAEAKKRIPELPEQKKQRLCEVYRLNEYQSSVLASDPQLADYFEKAASTASNKVAVANFLINDYLAVASDLETAVPIPAEYFSELSNLVEQGKLHMKQAKEIVKVMVAEKKSPAAIVQEQGIGQITSVEVLQGLCREAIEANPKSVSDYRSGKLAALNALKGYVMKKTKGQANPQIVHDLLEKTLKETG.

Belongs to the GatB/GatE family. GatB subfamily. In terms of assembly, heterotrimer of A, B and C subunits.

It carries out the reaction L-glutamyl-tRNA(Gln) + L-glutamine + ATP + H2O = L-glutaminyl-tRNA(Gln) + L-glutamate + ADP + phosphate + H(+). The catalysed reaction is L-aspartyl-tRNA(Asn) + L-glutamine + ATP + H2O = L-asparaginyl-tRNA(Asn) + L-glutamate + ADP + phosphate + 2 H(+). Functionally, allows the formation of correctly charged Asn-tRNA(Asn) or Gln-tRNA(Gln) through the transamidation of misacylated Asp-tRNA(Asn) or Glu-tRNA(Gln) in organisms which lack either or both of asparaginyl-tRNA or glutaminyl-tRNA synthetases. The reaction takes place in the presence of glutamine and ATP through an activated phospho-Asp-tRNA(Asn) or phospho-Glu-tRNA(Gln). This is Aspartyl/glutamyl-tRNA(Asn/Gln) amidotransferase subunit B from Methylacidiphilum infernorum (isolate V4) (Methylokorus infernorum (strain V4)).